The sequence spans 310 residues: Methionyl-tRNA formyltransferase (310 aa).

Residue serine 108–proline 111 coordinates (6S)-5,6,7,8-tetrahydrofolate.

It belongs to the Fmt family.

The enzyme catalyses L-methionyl-tRNA(fMet) + (6R)-10-formyltetrahydrofolate = N-formyl-L-methionyl-tRNA(fMet) + (6S)-5,6,7,8-tetrahydrofolate + H(+). Functionally, attaches a formyl group to the free amino group of methionyl-tRNA(fMet). The formyl group appears to play a dual role in the initiator identity of N-formylmethionyl-tRNA by promoting its recognition by IF2 and preventing the misappropriation of this tRNA by the elongation apparatus. The chain is Methionyl-tRNA formyltransferase from Fusobacterium nucleatum subsp. nucleatum (strain ATCC 25586 / DSM 15643 / BCRC 10681 / CIP 101130 / JCM 8532 / KCTC 2640 / LMG 13131 / VPI 4355).